We begin with the raw amino-acid sequence, 136 residues long: Transcription antitermination protein NusB (136 aa).

Belongs to the NusB family.

In terms of biological role, involved in transcription antitermination. Required for transcription of ribosomal RNA (rRNA) genes. Binds specifically to the boxA antiterminator sequence of the ribosomal RNA (rrn) operons. The sequence is that of Transcription antitermination protein NusB from Treponema denticola (strain ATCC 35405 / DSM 14222 / CIP 103919 / JCM 8153 / KCTC 15104).